A 240-amino-acid polypeptide reads, in one-letter code: Eukaryotic translation initiation factor 3 subunit J (240 aa).

Residues 1–66 are disordered; that stretch reads MADDWESAAD…VPVKTKPSKA (66 aa). A compositionally biased stretch (acidic residues) spans 27-45; sequence GEDDDDDVKESWEDEEEKK.

This sequence belongs to the eIF-3 subunit J family. Component of the eukaryotic translation initiation factor 3 (eIF-3) complex. The eIF-3 complex interacts with pix.

It is found in the cytoplasm. In terms of biological role, component of the eukaryotic translation initiation factor 3 (eIF-3) complex, which is involved in protein synthesis of a specialized repertoire of mRNAs and, together with other initiation factors, stimulates binding of mRNA and methionyl-tRNAi to the 40S ribosome. The eIF-3 complex specifically targets and initiates translation of a subset of mRNAs involved in cell proliferation. This chain is Eukaryotic translation initiation factor 3 subunit J, found in Drosophila persimilis (Fruit fly).